A 382-amino-acid chain; its full sequence is Homoserine O-acetyltransferase (382 aa).

The region spanning 50–360 (NAVLICHALT…DKGHDAFLLD (311 aa)) is the AB hydrolase-1 domain. The active-site Nucleophile is serine 155. Arginine 225 lines the substrate pocket. Active-site residues include aspartate 321 and histidine 354. Aspartate 355 lines the substrate pocket.

It belongs to the AB hydrolase superfamily. MetX family. In terms of assembly, homodimer.

It is found in the cytoplasm. The catalysed reaction is L-homoserine + acetyl-CoA = O-acetyl-L-homoserine + CoA. Its pathway is amino-acid biosynthesis; L-methionine biosynthesis via de novo pathway; O-acetyl-L-homoserine from L-homoserine: step 1/1. Transfers an acetyl group from acetyl-CoA to L-homoserine, forming acetyl-L-homoserine. This is Homoserine O-acetyltransferase from Caulobacter vibrioides (strain ATCC 19089 / CIP 103742 / CB 15) (Caulobacter crescentus).